The primary structure comprises 335 residues: Cytoplasmic envelopment protein 2 (335 aa).

This sequence belongs to the herpesviridae cytoplasmic envelopment protein 2 family. In terms of assembly, interacts with cytoplasmic envelopment protein 3 and with the capsid.

The protein localises to the virion tegument. It localises to the host cytoplasm. It is found in the host nucleus. Plays a critical role in cytoplasmic virus egress. Participates in the final step of tegumentation and envelope acquisition within the host cytoplasm by directly interacting with the capsid. Upon virion binding to target cell, a signaling cascade is triggered to disrupt the interaction with the capsid, thereby preparing capsid uncoating. The protein is Cytoplasmic envelopment protein 2 (33) of Connochaetes taurinus (Blue wildebeest).